The following is a 257-amino-acid chain: Probable enoyl-CoA hydratase echA8 (257 aa).

This sequence belongs to the enoyl-CoA hydratase/isomerase family.

The catalysed reaction is a (3S)-3-hydroxyacyl-CoA = a (2E)-enoyl-CoA + H2O. The enzyme catalyses a 4-saturated-(3S)-3-hydroxyacyl-CoA = a (3E)-enoyl-CoA + H2O. Functionally, could possibly oxidize fatty acids using specific components. This Mycobacterium tuberculosis (strain CDC 1551 / Oshkosh) protein is Probable enoyl-CoA hydratase echA8 (echA8).